Consider the following 237-residue polypeptide: Uridylate kinase (237 aa).

11–14 is a binding site for ATP; it reads KLSG. Gly53 is a binding site for UMP. The ATP site is built by Gly54 and Arg58. UMP-binding positions include Asp73 and 134 to 141; that span reads TGNPFFTT. Residues Thr161, Tyr167, and Asp170 each contribute to the ATP site.

Belongs to the UMP kinase family. As to quaternary structure, homohexamer.

The protein resides in the cytoplasm. The enzyme catalyses UMP + ATP = UDP + ADP. It functions in the pathway pyrimidine metabolism; CTP biosynthesis via de novo pathway; UDP from UMP (UMPK route): step 1/1. Inhibited by UTP. In terms of biological role, catalyzes the reversible phosphorylation of UMP to UDP. This chain is Uridylate kinase, found in Burkholderia mallei (strain NCTC 10247).